Reading from the N-terminus, the 366-residue chain is Lysophosphatidic acid receptor 1-B (366 aa).

The Extracellular portion of the chain corresponds to 1–52; sequence MTSLSEFVSEPIGMMSQTSAASESQCYYNETIAFFYNRSGKYLDTEWNAVSK. 2 disulfide bridges follow: cysteine 26–cysteine 192 and cysteine 190–cysteine 197. N-linked (GlcNAc...) asparagine glycosylation is found at asparagine 29 and asparagine 37. Lysine 41 contacts a 1-acyl-sn-glycero-3-phosphate. A helical membrane pass occupies residues 53-77; that stretch reads LVMGLGITVCIFIMLANLLVMVAIY. Residues 78-85 lie on the Cytoplasmic side of the membrane; it reads VNRRFHFP. A helical membrane pass occupies residues 86–109; the sequence is IYYLMANLAAADFFAGLAYFYLMF. The Extracellular segment spans residues 110–123; the sequence is NTGPNTRRLTVSTW. A helical transmembrane segment spans residues 124 to 146; it reads LLRQGLIDTSLTASVANLLAIAI. 126–131 provides a ligand contact to a 1-acyl-sn-glycero-3-phosphate; the sequence is RQGLID. The Cytoplasmic portion of the chain corresponds to 147-165; sequence ERHITVFRMQLHTRMSNRR. Residues 166 to 186 traverse the membrane as a helical segment; that stretch reads VVVVIVVIWTVAIVMGAIPSV. Residues 187–206 lie on the Extracellular side of the membrane; that stretch reads GWNCICDLEHCSNMAPLYSD. The chain crosses the membrane as a helical span at residues 207 to 227; sequence SYLIFWTIFNLVTFVVMVVLY. Tryptophan 212 contributes to the a 1-acyl-sn-glycero-3-phosphate binding site. Residues 228-257 lie on the Cytoplasmic side of the membrane; the sequence is AHIFVYVRQRTMRMSRHSSGPRRNRDTMMS. The chain crosses the membrane as a helical span at residues 258 to 282; that stretch reads LLKTVVIVLGAFIVCWTPGLVLLLL. Residues 283 to 296 lie on the Extracellular side of the membrane; the sequence is DVCCPQCNILAYEK. Cysteine 286 and cysteine 289 are disulfide-bonded. Residues 297–317 traverse the membrane as a helical segment; it reads FFLLLAEFNSAMNPIIYSYRD. The Cytoplasmic segment spans residues 318 to 366; that stretch reads KEMSATFKQILCCQRTENVNGPTEGSDRSASSLNHTILAGVHSNDHSVV.

This sequence belongs to the G-protein coupled receptor 1 family. As to expression, expressed at high levels in oocytes and at lower levels in brain and spinal cord. Below detection level in lung, heart, kidney, liver, muscle, stomach, and intestine.

It localises to the cell surface. Its subcellular location is the cell membrane. The protein resides in the endosome. Its function is as follows. Receptor for lysophosphatidic acid (LPA). Plays a role in the reorganization of the actin cytoskeleton, cell migration, differentiation and proliferation, and thereby contributes to the responses to tissue damage and infectious agents. Activates downstream signaling cascades via the G(i)/G(o), G(12)/G(13), and G(q) families of heteromeric G proteins. Signaling inhibits adenylyl cyclase activity and decreases cellular cAMP levels. Signaling triggers an increase of cytoplasmic Ca(2+) levels. Signaling leads to the activation of phospholipase C (PLC) and the formation of inositol 1,4,5-trisphosphate. Signaling mediates activation of down-stream MAP kinases. Contributes to the regulation of cell shape. Promotes Rho-dependent reorganization of the actin cytoskeleton in neuronal cells and neurite retraction. Promotes the activation of Rho and the formation of actin stress fibers. Promotes formation of lamellipodia at the leading edge of migrating cells via activation of Rac. Through its function as lysophosphatidic acid receptor, plays a role in chemotaxis and cell migration, including responses to injury and wounding. Promotes cell proliferation in response to lysophosphatidic acid. The chain is Lysophosphatidic acid receptor 1-B (lpar1-b) from Xenopus laevis (African clawed frog).